The chain runs to 427 residues: Enolase (427 aa).

Position 163 (Q163) interacts with (2R)-2-phosphoglycerate. The active-site Proton donor is E205. Residues D242, E285, and D312 each contribute to the Mg(2+) site. Residues K337, R366, S367, and K388 each coordinate (2R)-2-phosphoglycerate. The Proton acceptor role is filled by K337.

It belongs to the enolase family. The cofactor is Mg(2+).

It localises to the cytoplasm. The protein localises to the secreted. The protein resides in the cell surface. The enzyme catalyses (2R)-2-phosphoglycerate = phosphoenolpyruvate + H2O. It functions in the pathway carbohydrate degradation; glycolysis; pyruvate from D-glyceraldehyde 3-phosphate: step 4/5. Catalyzes the reversible conversion of 2-phosphoglycerate (2-PG) into phosphoenolpyruvate (PEP). It is essential for the degradation of carbohydrates via glycolysis. This chain is Enolase, found in Burkholderia lata (strain ATCC 17760 / DSM 23089 / LMG 22485 / NCIMB 9086 / R18194 / 383).